The sequence spans 244 residues: Phosphoadenosine 5'-phosphosulfate reductase (244 aa).

C239 functions as the Nucleophile; cysteine thiosulfonate intermediate in the catalytic mechanism.

The protein belongs to the PAPS reductase family. CysH subfamily.

The protein localises to the cytoplasm. The enzyme catalyses [thioredoxin]-disulfide + sulfite + adenosine 3',5'-bisphosphate + 2 H(+) = [thioredoxin]-dithiol + 3'-phosphoadenylyl sulfate. It participates in sulfur metabolism; hydrogen sulfide biosynthesis; sulfite from sulfate: step 3/3. Its function is as follows. Catalyzes the formation of sulfite from phosphoadenosine 5'-phosphosulfate (PAPS) using thioredoxin as an electron donor. The protein is Phosphoadenosine 5'-phosphosulfate reductase of Klebsiella pneumoniae (strain 342).